The sequence spans 443 residues: MVMEKLGDSLQGALKKLIGAGRIDERTVNEVVKDIQRALLQADVNVKLVMGMSQRIKERAMKEDPPAGMNPREHVIRIVYQELMEIIGKGADIQLKPQTIMMVGLQGSGKTTSAAKLARYFQRKGLKAGVVAADTFRPGAYHQLKTLSEKLNVGFYGEEGNPDAVEITIHGLKALEKYDIKIVDTAGRHALEADLIEEMERIHAVAKPDHKFMVLDAGIGQQASQQAHAFNDSVGITGVIITKLDGTAKGGGALSAVSETKAPIAFIGVGETPEDFEKFEADRFISRLLGMGDLKSLMEKAEESLSEEDVNVEALMQGRFTLKDMYKQLEAMNKMGPLKQIMSMLPMGMGGLGGVKLSDEMFQATSDKMKNYKVIMDSMTEDEMADPKLIGGSRIKRISRGSGCSPEDVRELLKYHKTMQTALKGFRGGKFNIQKMMKKKMGM.

GTP contacts are provided by residues 104 to 111, 184 to 188, and 242 to 245; these read GLQGSGKT, DTAGR, and TKLD.

The protein belongs to the GTP-binding SRP family. SRP54 subfamily. As to quaternary structure, part of the signal recognition particle protein translocation system, which is composed of SRP and FtsY. Archaeal SRP consists of a 7S RNA molecule of 300 nucleotides and two protein subunits: SRP54 and SRP19.

It is found in the cytoplasm. It catalyses the reaction GTP + H2O = GDP + phosphate + H(+). In terms of biological role, involved in targeting and insertion of nascent membrane proteins into the cytoplasmic membrane. Binds to the hydrophobic signal sequence of the ribosome-nascent chain (RNC) as it emerges from the ribosomes. The SRP-RNC complex is then targeted to the cytoplasmic membrane where it interacts with the SRP receptor FtsY. This is Signal recognition particle 54 kDa protein from Methanosarcina mazei (strain ATCC BAA-159 / DSM 3647 / Goe1 / Go1 / JCM 11833 / OCM 88) (Methanosarcina frisia).